Consider the following 1106-residue polypeptide: Protein translocase subunit SecA (1106 aa).

Residues glutamine 175, 193 to 197 (GEGKT), and aspartate 694 each bind ATP. Positions 1021–1106 (QEAPADEQQP…KYKNCHGQNA (86 aa)) are disordered. The span at 1042–1056 (QRQDMSKYREQKQDL) shows a compositional bias: basic and acidic residues. Polar residues predominate over residues 1057–1067 (SDPNQQAAASQ). The span at 1068–1085 (DTREQQKREPIRAEKTVG) shows a compositional bias: basic and acidic residues. Positions 1090, 1092, 1101, and 1102 each coordinate Zn(2+).

Belongs to the SecA family. In terms of assembly, monomer and homodimer. Part of the essential Sec protein translocation apparatus which comprises SecA, SecYEG and auxiliary proteins SecDF. Other proteins may also be involved. The cofactor is Zn(2+).

It is found in the cell inner membrane. Its subcellular location is the cytoplasm. It carries out the reaction ATP + H2O + cellular proteinSide 1 = ADP + phosphate + cellular proteinSide 2.. Functionally, part of the Sec protein translocase complex. Interacts with the SecYEG preprotein conducting channel. Has a central role in coupling the hydrolysis of ATP to the transfer of proteins into and across the cell membrane, serving as an ATP-driven molecular motor driving the stepwise translocation of polypeptide chains across the membrane. The sequence is that of Protein translocase subunit SecA from Bacteroides thetaiotaomicron (strain ATCC 29148 / DSM 2079 / JCM 5827 / CCUG 10774 / NCTC 10582 / VPI-5482 / E50).